The following is a 197-amino-acid chain: NADH-quinone oxidoreductase subunit C (197 aa).

The protein belongs to the complex I 30 kDa subunit family. As to quaternary structure, NDH-1 is composed of 14 different subunits. Subunits NuoB, C, D, E, F, and G constitute the peripheral sector of the complex.

The protein resides in the cell inner membrane. It catalyses the reaction a quinone + NADH + 5 H(+)(in) = a quinol + NAD(+) + 4 H(+)(out). In terms of biological role, NDH-1 shuttles electrons from NADH, via FMN and iron-sulfur (Fe-S) centers, to quinones in the respiratory chain. The immediate electron acceptor for the enzyme in this species is believed to be ubiquinone. Couples the redox reaction to proton translocation (for every two electrons transferred, four hydrogen ions are translocated across the cytoplasmic membrane), and thus conserves the redox energy in a proton gradient. This is NADH-quinone oxidoreductase subunit C from Neisseria meningitidis serogroup A / serotype 4A (strain DSM 15465 / Z2491).